Consider the following 93-residue polypeptide: DNA-directed RNA polymerase subunit omega (93 aa).

This sequence belongs to the RNA polymerase subunit omega family. The RNAP catalytic core consists of 2 alpha, 1 beta, 1 beta' and 1 omega subunit. When a sigma factor is associated with the core the holoenzyme is formed, which can initiate transcription.

The enzyme catalyses RNA(n) + a ribonucleoside 5'-triphosphate = RNA(n+1) + diphosphate. Functionally, promotes RNA polymerase assembly. Latches the N- and C-terminal regions of the beta' subunit thereby facilitating its interaction with the beta and alpha subunits. The sequence is that of DNA-directed RNA polymerase subunit omega from Shewanella piezotolerans (strain WP3 / JCM 13877).